The primary structure comprises 720 residues: Putative glutamine--fructose-6-phosphate aminotransferase [isomerizing] (720 aa).

Residue cysteine 2 is the Nucleophile; for GATase activity of the active site. Residues 2-321 form the Glutamine amidotransferase type-2 domain; the sequence is CGIFGYCNFL…DNDTAHIYDG (320 aa). Polar residues predominate over residues 266-280; sequence STTSTFNHGSSTETP. Residues 266-285 form a disordered region; sequence STTSTFNHGSSTETPAENGL. 2 consecutive SIS domains span residues 393–532 and 565–710; these read WLTE…DLVS and CDKK…VDLP.

The enzyme catalyses D-fructose 6-phosphate + L-glutamine = D-glucosamine 6-phosphate + L-glutamate. It participates in nucleotide-sugar biosynthesis; UDP-N-acetyl-alpha-D-glucosamine biosynthesis; alpha-D-glucosamine 6-phosphate from D-fructose 6-phosphate: step 1/1. Its function is as follows. Involved in amino sugar synthesis (formation of chitin, supplies the amino sugars of asparagine-linked oligosaccharides of glycoproteins). The polypeptide is Putative glutamine--fructose-6-phosphate aminotransferase [isomerizing] (Saccharomyces cerevisiae (strain JAY291) (Baker's yeast)).